A 294-amino-acid polypeptide reads, in one-letter code: UPF0761 membrane protein MADE_1017605/MADE_1018330 (294 aa).

The next 6 helical transmembrane spans lie at 45–65 (LLSL…FPAF), 99–119 (ASQM…MLIS), 141–161 (FAIY…SVVV), 182–202 (FLLS…LYMV), 213–233 (AFVG…GFAL), and 247–267 (ALAV…IVLF).

This sequence belongs to the UPF0761 family.

It localises to the cell inner membrane. The sequence is that of UPF0761 membrane protein MADE_1017605/MADE_1018330 from Alteromonas mediterranea (strain DSM 17117 / CIP 110805 / LMG 28347 / Deep ecotype).